We begin with the raw amino-acid sequence, 141 residues long: Nucleoside diphosphate kinase (141 aa).

The ATP site is built by K11, F59, R87, T93, R104, and N114. The active-site Pros-phosphohistidine intermediate is the H117.

The protein belongs to the NDK family. In terms of assembly, homotetramer. Mg(2+) serves as cofactor.

The protein localises to the cytoplasm. The enzyme catalyses a 2'-deoxyribonucleoside 5'-diphosphate + ATP = a 2'-deoxyribonucleoside 5'-triphosphate + ADP. The catalysed reaction is a ribonucleoside 5'-diphosphate + ATP = a ribonucleoside 5'-triphosphate + ADP. Major role in the synthesis of nucleoside triphosphates other than ATP. The ATP gamma phosphate is transferred to the NDP beta phosphate via a ping-pong mechanism, using a phosphorylated active-site intermediate. The polypeptide is Nucleoside diphosphate kinase (Neisseria gonorrhoeae (strain NCCP11945)).